Here is a 274-residue protein sequence, read N- to C-terminus: Anamorsin homolog (274 aa).

The N-terminal SAM-like domain stretch occupies residues 1–154 (MDRTRKQCSV…KKPSWKIGSS (154 aa)). Residues 154-185 (SFALKKSTKGSVKVNLDDDLIDEDSLLTEEDM) are linker. [2Fe-2S] cluster contacts are provided by Cys-196, Cys-205, Cys-208, and Cys-210. The segment at 196–210 (CEVGSTRKACKNCTC) is fe-S binding site A. Residues Cys-235, Cys-238, Cys-246, and Cys-249 each coordinate [4Fe-4S] cluster. 2 consecutive short sequence motifs (cx2C motif) follow at residues 235-238 (CGSC) and 246-249 (CSTC). Residues 235–249 (CGSCGLGDAFRCSTC) are fe-S binding site B.

The protein belongs to the anamorsin family. In terms of assembly, monomer. [2Fe-2S] cluster serves as cofactor. It depends on [4Fe-4S] cluster as a cofactor.

It localises to the cytoplasm. The protein resides in the mitochondrion intermembrane space. In terms of biological role, component of the cytosolic iron-sulfur (Fe-S) protein assembly (CIA) machinery. Required for the maturation of extramitochondrial Fe-S proteins. Part of an electron transfer chain functioning in an early step of cytosolic Fe-S biogenesis, facilitating the de novo assembly of a [4Fe-4S] cluster on the cytosolic Fe-S scaffold complex. Electrons are transferred from NADPH via a FAD- and FMN-containing diflavin oxidoreductase. Together with the diflavin oxidoreductase, also required for the assembly of the diferric tyrosyl radical cofactor of ribonucleotide reductase (RNR), probably by providing electrons for reduction during radical cofactor maturation in the catalytic small subunit. The polypeptide is Anamorsin homolog (Ricinus communis (Castor bean)).